The sequence spans 527 residues: Glucose-6-phosphate isomerase (527 aa).

Residue E347 is the Proton donor of the active site. Residues H378 and K493 contribute to the active site.

This sequence belongs to the GPI family.

Its subcellular location is the cytoplasm. It catalyses the reaction alpha-D-glucose 6-phosphate = beta-D-fructose 6-phosphate. It functions in the pathway carbohydrate biosynthesis; gluconeogenesis. Its pathway is carbohydrate degradation; glycolysis; D-glyceraldehyde 3-phosphate and glycerone phosphate from D-glucose: step 2/4. Its function is as follows. Catalyzes the reversible isomerization of glucose-6-phosphate to fructose-6-phosphate. This is Glucose-6-phosphate isomerase from Chlamydia caviae (strain ATCC VR-813 / DSM 19441 / 03DC25 / GPIC) (Chlamydophila caviae).